The primary structure comprises 336 residues: Flavonol synthase/flavanone 3-hydroxylase (336 aa).

The tract at residues 99–118 (EKESVAKPEDSKDIEGYGTK) is disordered. Residues 196-296 (MAEYMMKINY…RMSWPVFLEP (101 aa)) form the Fe2OG dioxygenase domain. 204-206 (NYY) is a binding site for 2-oxoglutarate. Fe cation is bound by residues His221, Asp223, and His277. A 2-oxoglutarate-binding site is contributed by 287–289 (RMS).

This sequence belongs to the iron/ascorbate-dependent oxidoreductase family. L-ascorbate serves as cofactor. Fe(2+) is required as a cofactor. As to expression, expressed in young seedlings (at protein level). Expressed in roots, emerging leaves, shoot-root transition zone, trichomes, flowers and siliques. In cotyledons, expressed mostly on the adaxial side and only in guard cells on the abaxial side.

Its subcellular location is the cytoplasm. The protein localises to the nucleus. The catalysed reaction is a (2R,3R)-dihydroflavonol + 2-oxoglutarate + O2 = a flavonol + succinate + CO2 + H2O. It carries out the reaction a (2S)-flavan-4-one + 2-oxoglutarate + O2 = a (2R,3R)-dihydroflavonol + succinate + CO2. It functions in the pathway secondary metabolite biosynthesis; flavonoid biosynthesis. Its function is as follows. Catalyzes the formation of flavonols from dihydroflavonols. It can act on dihydrokaempferol to produce kaempferol, on dihydroquercetin to produce quercitin and on dihydromyricetin to produce myricetin. In vitro catalyzes the oxidation of both enantiomers of naringenin to give both cis- and trans-dihydrokaempferol. The polypeptide is Flavonol synthase/flavanone 3-hydroxylase (FLS1) (Arabidopsis thaliana (Mouse-ear cress)).